Consider the following 432-residue polypeptide: Dihydroorotase (432 aa).

Zn(2+) is bound by residues His60 and His62. Residues 62–64 (HLR) and Asn94 each bind substrate. Residues Asp152, His179, and His232 each coordinate Zn(2+). Position 278 (Asn278) interacts with substrate. A Zn(2+)-binding site is contributed by Asp305. Residue Asp305 is part of the active site. Residues His309 and 323-324 (FG) contribute to the substrate site.

This sequence belongs to the metallo-dependent hydrolases superfamily. DHOase family. Class I DHOase subfamily. Zn(2+) is required as a cofactor.

The catalysed reaction is (S)-dihydroorotate + H2O = N-carbamoyl-L-aspartate + H(+). It functions in the pathway pyrimidine metabolism; UMP biosynthesis via de novo pathway; (S)-dihydroorotate from bicarbonate: step 3/3. Catalyzes the reversible cyclization of carbamoyl aspartate to dihydroorotate. This is Dihydroorotase from Elusimicrobium minutum (strain Pei191).